The primary structure comprises 190 residues: Holliday junction branch migration complex subunit RuvA (190 aa).

Residues 1–64 (MIGKLTGTLL…EDAQLLYGFG (64 aa)) are domain I. Residues 65 to 143 (THSERQAFRE…ADTGAQSLFV (79 aa)) are domain II. The segment at 144–148 (NNDQN) is flexible linker. A domain III region spans residues 148–190 (NDIVQALMALGYSDKDAAAALKKLPPDVGVTEGIKLALKALAK).

Belongs to the RuvA family. In terms of assembly, homotetramer. Forms an RuvA(8)-RuvB(12)-Holliday junction (HJ) complex. HJ DNA is sandwiched between 2 RuvA tetramers; dsDNA enters through RuvA and exits via RuvB. An RuvB hexamer assembles on each DNA strand where it exits the tetramer. Each RuvB hexamer is contacted by two RuvA subunits (via domain III) on 2 adjacent RuvB subunits; this complex drives branch migration. In the full resolvosome a probable DNA-RuvA(4)-RuvB(12)-RuvC(2) complex forms which resolves the HJ.

The protein resides in the cytoplasm. Its function is as follows. The RuvA-RuvB-RuvC complex processes Holliday junction (HJ) DNA during genetic recombination and DNA repair, while the RuvA-RuvB complex plays an important role in the rescue of blocked DNA replication forks via replication fork reversal (RFR). RuvA specifically binds to HJ cruciform DNA, conferring on it an open structure. The RuvB hexamer acts as an ATP-dependent pump, pulling dsDNA into and through the RuvAB complex. HJ branch migration allows RuvC to scan DNA until it finds its consensus sequence, where it cleaves and resolves the cruciform DNA. The polypeptide is Holliday junction branch migration complex subunit RuvA (Delftia acidovorans (strain DSM 14801 / SPH-1)).